A 442-amino-acid polypeptide reads, in one-letter code: Decapping and exoribonuclease protein 1 (442 aa).

Residues 31–40 show a composition bias toward basic and acidic residues; sequence QSKLCKEKTT. The disordered stretch occupies residues 31 to 56; the sequence is QSKLCKEKTTSDSSSSRKPSQQRDNY. A compositionally biased stretch (low complexity) spans 41-53; that stretch reads SDSSSSRKPSQQR. Arg101 is a binding site for substrate. Glu255 lines the a divalent metal cation pocket. Residue Glu293 participates in substrate binding. Residues Asp295, Glu306, and Leu307 each coordinate a divalent metal cation. Residues Lys308 and Gln330 each contribute to the substrate site.

The protein belongs to the DXO/Dom3Z family. Requires a divalent metal cation as cofactor.

The protein resides in the cytoplasm. It carries out the reaction a 5'-end NAD(+)-phospho-ribonucleoside in mRNA + H2O = a 5'-end phospho-ribonucleoside in mRNA + NAD(+) + H(+). It catalyses the reaction a 5'-end (N(7)-methyl 5'-triphosphoguanosine)-ribonucleoside-ribonucleotide in mRNA + H2O = a (N(7)-methyl 5'-triphosphoguanosine)-nucleoside + a 5'-end phospho-ribonucleoside in mRNA + H(+). In terms of biological role, decapping enzyme for NAD-capped RNAs: specifically hydrolyzes the nicotinamide adenine dinucleotide (NAD) cap from a subset of RNAs by removing the entire NAD moiety from the 5'-end of an NAD-capped RNA. The NAD-cap is present at the 5'-end of some RNAs and snoRNAs. In contrast to the canonical 5'-end N7 methylguanosine (m7G) cap, the NAD cap promotes mRNA decay. Also acts as a non-canonical decapping enzyme that removes the entire cap structure of m7G capped or incompletely capped RNAs. Has decapping activity toward incomplete 5'-end m7G cap mRNAs such as unmethylated 5'-end-capped RNA (cap0), while it has no activity toward 2'-O-ribose methylated m7G cap (cap1). Also has 5'-3' exonuclease activity. The protein is Decapping and exoribonuclease protein 1 (DXO1) of Saccharomyces cerevisiae (strain ATCC 204508 / S288c) (Baker's yeast).